Consider the following 265-residue polypeptide: Zwei Ig domain protein zig-1 (265 aa).

An N-terminal signal peptide occupies residues 1–17 (MKNLLLITFFVVSTVTA). The Extracellular portion of the chain corresponds to 18–232 (LGGRGSKSAL…KMVDVRSEFQ (215 aa)). Ig-like C2-type domains are found at residues 41-108 (HATD…TPHG) and 120-220 (PVVH…MLLV). 2 N-linked (GlcNAc...) asparagine glycosylation sites follow: Asn83 and Asn193. Cys155 and Cys202 form a disulfide bridge. The chain crosses the membrane as a helical span at residues 233-253 (WVYPLAVILITIFLLVVIIVF). Over 254 to 265 (CEWRNKKSTSKA) the chain is Cytoplasmic.

In terms of tissue distribution, expressed in neurons and body wall muscles.

The protein resides in the cell membrane. Functionally, probably not involved in maintaining the position of ASI and ASH head neuron cell bodies and ventral nerve cord axons of PVQ, PVP, RMEV, AVK and HSN neurons. In Caenorhabditis elegans, this protein is Zwei Ig domain protein zig-1.